The sequence spans 41 residues: Cytochrome b559 subunit beta (41 aa).

A helical transmembrane segment spans residues 16–32 (WLAVHALAVPTVFFLGS). His20 is a binding site for heme.

The protein belongs to the PsbE/PsbF family. Heterodimer of an alpha subunit and a beta subunit. PSII is composed of 1 copy each of membrane proteins PsbA, PsbB, PsbC, PsbD, PsbE, PsbF, PsbH, PsbI, PsbJ, PsbK, PsbL, PsbM, PsbT, PsbX, PsbY, PsbZ, Psb30/Ycf12, at least 3 peripheral proteins of the oxygen-evolving complex and a large number of cofactors. It forms dimeric complexes. Heme b serves as cofactor.

The protein resides in the plastid. It localises to the chloroplast thylakoid membrane. This b-type cytochrome is tightly associated with the reaction center of photosystem II (PSII). PSII is a light-driven water:plastoquinone oxidoreductase that uses light energy to abstract electrons from H(2)O, generating O(2) and a proton gradient subsequently used for ATP formation. It consists of a core antenna complex that captures photons, and an electron transfer chain that converts photonic excitation into a charge separation. This is Cytochrome b559 subunit beta from Nephroselmis olivacea (Green alga).